Here is a 510-residue protein sequence, read N- to C-terminus: Arginine biosynthesis bifunctional protein ArgJ, mitochondrial (510 aa).

Positions 57 to 70 (TSTNEPSAATTNVP) are enriched in polar residues. The interval 57-76 (TSTNEPSAATTNVPHPQEAP) is disordered. Substrate is bound by residues threonine 222, lysine 248, threonine 267, and glutamate 364. The active-site Nucleophile is threonine 267.

It belongs to the ArgJ family. As to quaternary structure, heterodimer of an alpha and a beta chain. Post-translationally, the alpha and beta chains are autoproteolytically processed from a single precursor protein within the mitochondrion.

It is found in the mitochondrion matrix. The catalysed reaction is N(2)-acetyl-L-ornithine + L-glutamate = N-acetyl-L-glutamate + L-ornithine. It catalyses the reaction L-glutamate + acetyl-CoA = N-acetyl-L-glutamate + CoA + H(+). Its pathway is amino-acid biosynthesis; L-arginine biosynthesis; L-ornithine and N-acetyl-L-glutamate from L-glutamate and N(2)-acetyl-L-ornithine (cyclic): step 1/1. It functions in the pathway amino-acid biosynthesis; L-arginine biosynthesis; N(2)-acetyl-L-ornithine from L-glutamate: step 1/4. Its function is as follows. Catalyzes two activities which are involved in the cyclic version of arginine biosynthesis: the synthesis of acetylglutamate from glutamate and acetyl-CoA, and of ornithine by transacetylation between acetylornithine and glutamate. The polypeptide is Arginine biosynthesis bifunctional protein ArgJ, mitochondrial (Malassezia globosa (strain ATCC MYA-4612 / CBS 7966) (Dandruff-associated fungus)).